A 194-amino-acid chain; its full sequence is Adenylate kinase (194 aa).

11–16 (GSGKGT) provides a ligand contact to ATP. The NMP stretch occupies residues 31-60 (STGELLRAEIKAQTELGQAAAGYINEGHLV). Residues threonine 32, arginine 37, 58–60 (HLV), 86–89 (GFPR), and glutamine 93 contribute to the AMP site. The LID stretch occupies residues 127–137 (NRGKVSGRSDD). Arginine 128 provides a ligand contact to ATP. The AMP site is built by arginine 134 and arginine 145. Residue glycine 173 participates in ATP binding.

Belongs to the adenylate kinase family. Monomer.

The protein localises to the cytoplasm. The catalysed reaction is AMP + ATP = 2 ADP. It participates in purine metabolism; AMP biosynthesis via salvage pathway; AMP from ADP: step 1/1. Catalyzes the reversible transfer of the terminal phosphate group between ATP and AMP. Plays an important role in cellular energy homeostasis and in adenine nucleotide metabolism. In Porphyromonas gingivalis (strain ATCC BAA-308 / W83), this protein is Adenylate kinase.